The sequence spans 356 residues: Tyrosine recombinase XerS (356 aa).

Residues 16-121 (LMPWYVLEYY…ALSSLYKYLT (106 aa)) form the Core-binding (CB) domain. In terms of domain architecture, Tyr recombinase spans 169–354 (GFLTYIDQEH…VNDEQKNALD (186 aa)). Residues R210, K234, H306, R309, and H332 contribute to the active site. Residue Y341 is the O-(3'-phospho-DNA)-tyrosine intermediate of the active site.

It belongs to the 'phage' integrase family. XerS subfamily.

It is found in the cytoplasm. FtsK is required for recombination. In terms of biological role, site-specific tyrosine recombinase, which acts by catalyzing the cutting and rejoining of the recombining DNA molecules. Essential to convert dimers of the bacterial chromosome into monomers to permit their segregation at cell division. The polypeptide is Tyrosine recombinase XerS (Streptococcus pneumoniae serotype 2 (strain D39 / NCTC 7466)).